Reading from the N-terminus, the 264-residue chain is Thymidylate synthase 2 (264 aa).

Arg21 is a binding site for dUMP. His51 is a (6R)-5,10-methylene-5,6,7,8-tetrahydrofolate binding site. 126 to 127 (RR) serves as a coordination point for dUMP. Catalysis depends on Cys146, which acts as the Nucleophile. Residues 166–169 (RSAD), Asn177, and 207–209 (HIY) contribute to the dUMP site. A (6R)-5,10-methylene-5,6,7,8-tetrahydrofolate-binding site is contributed by Asp169. Ser263 serves as a coordination point for (6R)-5,10-methylene-5,6,7,8-tetrahydrofolate.

The protein belongs to the thymidylate synthase family. Bacterial-type ThyA subfamily. In terms of assembly, homodimer.

The protein localises to the cytoplasm. The enzyme catalyses dUMP + (6R)-5,10-methylene-5,6,7,8-tetrahydrofolate = 7,8-dihydrofolate + dTMP. The protein operates within pyrimidine metabolism; dTTP biosynthesis. In terms of biological role, catalyzes the reductive methylation of 2'-deoxyuridine-5'-monophosphate (dUMP) to 2'-deoxythymidine-5'-monophosphate (dTMP) while utilizing 5,10-methylenetetrahydrofolate (mTHF) as the methyl donor and reductant in the reaction, yielding dihydrofolate (DHF) as a by-product. This enzymatic reaction provides an intracellular de novo source of dTMP, an essential precursor for DNA biosynthesis. In Bacillus amyloliquefaciens (Bacillus velezensis), this protein is Thymidylate synthase 2.